Reading from the N-terminus, the 404-residue chain is Probable tRNA sulfurtransferase (404 aa).

The region spanning 60 to 165 (QPIVEALKLV…DEAAYISYEE (106 aa)) is the THUMP domain. ATP-binding positions include 183 to 184 (ML), 208 to 209 (HF), Arg265, Gly287, and Gln296.

The protein belongs to the ThiI family.

Its subcellular location is the cytoplasm. It catalyses the reaction [ThiI sulfur-carrier protein]-S-sulfanyl-L-cysteine + a uridine in tRNA + 2 reduced [2Fe-2S]-[ferredoxin] + ATP + H(+) = [ThiI sulfur-carrier protein]-L-cysteine + a 4-thiouridine in tRNA + 2 oxidized [2Fe-2S]-[ferredoxin] + AMP + diphosphate. It carries out the reaction [ThiS sulfur-carrier protein]-C-terminal Gly-Gly-AMP + S-sulfanyl-L-cysteinyl-[cysteine desulfurase] + AH2 = [ThiS sulfur-carrier protein]-C-terminal-Gly-aminoethanethioate + L-cysteinyl-[cysteine desulfurase] + A + AMP + 2 H(+). It participates in cofactor biosynthesis; thiamine diphosphate biosynthesis. Functionally, catalyzes the ATP-dependent transfer of a sulfur to tRNA to produce 4-thiouridine in position 8 of tRNAs, which functions as a near-UV photosensor. Also catalyzes the transfer of sulfur to the sulfur carrier protein ThiS, forming ThiS-thiocarboxylate. This is a step in the synthesis of thiazole, in the thiamine biosynthesis pathway. The sulfur is donated as persulfide by IscS. The chain is Probable tRNA sulfurtransferase from Streptococcus pyogenes serotype M4 (strain MGAS10750).